The chain runs to 209 residues: NADH-ubiquinone oxidoreductase subunit 9 (209 aa).

Belongs to the complex I 30 kDa subunit family. Complex I is composed of about 30 different subunits.

The protein resides in the mitochondrion inner membrane. The enzyme catalyses a ubiquinone + NADH + 5 H(+)(in) = a ubiquinol + NAD(+) + 4 H(+)(out). Functionally, core subunit of the mitochondrial membrane respiratory chain NADH dehydrogenase (Complex I) that is believed to belong to the minimal assembly required for catalysis. Complex I functions in the transfer of electrons from NADH to the respiratory chain. The immediate electron acceptor for the enzyme is believed to be ubiquinone. The polypeptide is NADH-ubiquinone oxidoreductase subunit 9 (NAD9) (Paramecium tetraurelia).